The following is a 162-amino-acid chain: 2-C-methyl-D-erythritol 2,4-cyclodiphosphate synthase (162 aa).

2 residues coordinate a divalent metal cation: Asp10 and His12. 4-CDP-2-C-methyl-D-erythritol 2-phosphate-binding positions include 10 to 12 (DVH) and 36 to 37 (HS). His44 lines the a divalent metal cation pocket. Residues 58–60 (DIG), 63–67 (FSDTD), and Arg144 contribute to the 4-CDP-2-C-methyl-D-erythritol 2-phosphate site.

It belongs to the IspF family. In terms of assembly, homotrimer. It depends on a divalent metal cation as a cofactor.

The enzyme catalyses 4-CDP-2-C-methyl-D-erythritol 2-phosphate = 2-C-methyl-D-erythritol 2,4-cyclic diphosphate + CMP. It participates in isoprenoid biosynthesis; isopentenyl diphosphate biosynthesis via DXP pathway; isopentenyl diphosphate from 1-deoxy-D-xylulose 5-phosphate: step 4/6. Its function is as follows. Involved in the biosynthesis of isopentenyl diphosphate (IPP) and dimethylallyl diphosphate (DMAPP), two major building blocks of isoprenoid compounds. Catalyzes the conversion of 4-diphosphocytidyl-2-C-methyl-D-erythritol 2-phosphate (CDP-ME2P) to 2-C-methyl-D-erythritol 2,4-cyclodiphosphate (ME-CPP) with a corresponding release of cytidine 5-monophosphate (CMP). The sequence is that of 2-C-methyl-D-erythritol 2,4-cyclodiphosphate synthase from Burkholderia mallei (strain NCTC 10247).